The sequence spans 129 residues: S-adenosylmethionine decarboxylase proenzyme (129 aa).

The Schiff-base intermediate with substrate; via pyruvic acid role is filled by Ser63. At Ser63 the chain carries Pyruvic acid (Ser); by autocatalysis. His68 (proton acceptor; for processing activity) is an active-site residue. Cys83 serves as the catalytic Proton donor; for catalytic activity.

The protein belongs to the prokaryotic AdoMetDC family. Type 1 subfamily. Heterotetramer of two alpha and two beta chains arranged as a dimer of alpha/beta heterodimers. It depends on pyruvate as a cofactor. Is synthesized initially as an inactive proenzyme. Formation of the active enzyme involves a self-maturation process in which the active site pyruvoyl group is generated from an internal serine residue via an autocatalytic post-translational modification. Two non-identical subunits are generated from the proenzyme in this reaction, and the pyruvate is formed at the N-terminus of the alpha chain, which is derived from the carboxyl end of the proenzyme. The post-translation cleavage follows an unusual pathway, termed non-hydrolytic serinolysis, in which the side chain hydroxyl group of the serine supplies its oxygen atom to form the C-terminus of the beta chain, while the remainder of the serine residue undergoes an oxidative deamination to produce ammonia and the pyruvoyl group blocking the N-terminus of the alpha chain.

The catalysed reaction is S-adenosyl-L-methionine + H(+) = S-adenosyl 3-(methylsulfanyl)propylamine + CO2. The protein operates within amine and polyamine biosynthesis; S-adenosylmethioninamine biosynthesis; S-adenosylmethioninamine from S-adenosyl-L-methionine: step 1/1. Functionally, catalyzes the decarboxylation of S-adenosylmethionine to S-adenosylmethioninamine (dcAdoMet), the propylamine donor required for the synthesis of the polyamines spermine and spermidine from the diamine putrescine. The sequence is that of S-adenosylmethionine decarboxylase proenzyme from Shouchella clausii (strain KSM-K16) (Alkalihalobacillus clausii).